Consider the following 579-residue polypeptide: Putative adenine deaminase OB0751 (579 aa).

Belongs to the metallo-dependent hydrolases superfamily. Adenine deaminase family.

It carries out the reaction adenine + H2O + H(+) = hypoxanthine + NH4(+). The polypeptide is Putative adenine deaminase OB0751 (Oceanobacillus iheyensis (strain DSM 14371 / CIP 107618 / JCM 11309 / KCTC 3954 / HTE831)).